Here is a 203-residue protein sequence, read N- to C-terminus: Protein GrpE (203 aa).

Residues 1–20 (MSDNGDNNTKSPQHNNPQPN) are compositionally biased toward polar residues. The tract at residues 1 to 46 (MSDNGDNNTKSPQHNNPQPNEKSDGKVQPGQPQVNPQRKFTAGINK) is disordered.

Belongs to the GrpE family. In terms of assembly, homodimer.

It is found in the cytoplasm. Participates actively in the response to hyperosmotic and heat shock by preventing the aggregation of stress-denatured proteins, in association with DnaK and GrpE. It is the nucleotide exchange factor for DnaK and may function as a thermosensor. Unfolded proteins bind initially to DnaJ; upon interaction with the DnaJ-bound protein, DnaK hydrolyzes its bound ATP, resulting in the formation of a stable complex. GrpE releases ADP from DnaK; ATP binding to DnaK triggers the release of the substrate protein, thus completing the reaction cycle. Several rounds of ATP-dependent interactions between DnaJ, DnaK and GrpE are required for fully efficient folding. This is Protein GrpE from Ehrlichia chaffeensis (strain ATCC CRL-10679 / Arkansas).